Consider the following 187-residue polypeptide: MSYSHPASRYERVYVLRIGHRPERDKRITTHVGLVARAFGANGFILGDTCDEKVMESLKDVIDRWGGSMELACGVNSRRYVLEWKRAGGEVIHLTMYGLHVDDVIEEIKRSSKPKLIIVGAEKVPPFFYEYADYNVAIGHQPHSEVAALAIFLHKLYEGKELYIDFPRAKLRIVPSARGKKVVSREA.

Residues Leu-94 and Gly-120–Val-124 contribute to the S-adenosyl-L-methionine site.

It belongs to the aTrm56 family. As to quaternary structure, homodimer.

It localises to the cytoplasm. The catalysed reaction is cytidine(56) in tRNA + S-adenosyl-L-methionine = 2'-O-methylcytidine(56) in tRNA + S-adenosyl-L-homocysteine + H(+). Specifically catalyzes the AdoMet-dependent 2'-O-ribose methylation of cytidine at position 56 in tRNAs. The sequence is that of tRNA (cytidine(56)-2'-O)-methyltransferase from Hyperthermus butylicus (strain DSM 5456 / JCM 9403 / PLM1-5).